We begin with the raw amino-acid sequence, 414 residues long: MATPVRGETRNVIDDNISARIQSKVKTNDTVRQTPSSLRKVSIKDEQVRQYQRNLNRFKTILNGLKAEEEKLSEADDIQMLAEKLLKLGETIDKVENRIVDLVEKIQLLETNENNNILHEHIDATGTYYLFDTLTSTNKRFYPKDCVFDYRTNNVENIPILLNNFKKFIKKYQFDDVFENDIIEIDPRENEILCKIIKEGLGESLDIMNTNTTDIFRIIDGLKKQNIEVCMVEMSELEPGEKVLVDTTCRNSALLMNKLQKLVLMEKWIFSKCCQDCPNLKDYLQEAIMGTLHESLRNSVKQRLYNIPHDVGIDHEEFLINTVIETVIDLSPIADDQIENSCMYCKSVFHCSINCKKKPNRELRPDSTNFSKTYYLQGAQRQQPLKSSAKRTKVLEQDTKKVEQSVQQQKTGNY.

Residues 39-115 adopt a coiled-coil conformation; that stretch reads RKVSIKDEQV…IQLLETNENN (77 aa). Positions 378–414 are disordered; the sequence is GAQRQQPLKSSAKRTKVLEQDTKKVEQSVQQQKTGNY. Positions 393-403 are enriched in basic and acidic residues; that stretch reads KVLEQDTKKVE. Residues 404–414 are compositionally biased toward polar residues; sequence QSVQQQKTGNY.

Its function is as follows. Capsid protein (CA) is the structural component of the virus-like particle (VLP), forming the shell that encapsulates the retrotransposons dimeric RNA genome. This Saccharomyces cerevisiae (strain ATCC 204508 / S288c) (Baker's yeast) protein is Transposon Ty4-J Gag polyprotein (TY4A-J).